Here is a 758-residue protein sequence, read N- to C-terminus: Inhibitor of nuclear factor kappa-B kinase subunit alpha (758 aa).

A Protein kinase domain is found at 15–301; sequence WVMKERLGTG…LNTDSKQPQC (287 aa). ATP-binding positions include 21-29 and Lys-44; that span reads LGTGGFGHV. Asp-145 (proton acceptor) is an active-site residue. A leucine-zipper region spans residues 456-477; sequence LLRFNTNLTRYKNMMFSFSQQL. An NEMO-binding region spans residues 741-746; sequence QDWSWT.

The protein belongs to the protein kinase superfamily. Ser/Thr protein kinase family. I-kappa-B kinase subfamily. As to quaternary structure, directly interacts with ikbkg/nemo.

It is found in the cytoplasm. It localises to the nucleus. The enzyme catalyses L-seryl-[I-kappa-B protein] + ATP = O-phospho-L-seryl-[I-kappa-B protein] + ADP + H(+). Activated when phosphorylated and inactivated when dephosphorylated. In terms of biological role, phosphorylates inhibitors of NF-kappa-B thus leading to the dissociation of the inhibitor/NF-kappa-B complex and ultimately the degradation of the inhibitor. Phosphorylates 'Ser-10' of histone H3 at NF-kappa-B-regulated promoters during inflammatory responses triggered by cytokines. The sequence is that of Inhibitor of nuclear factor kappa-B kinase subunit alpha (chuk) from Danio rerio (Zebrafish).